The sequence spans 252 residues: tRNA (guanine-N(1)-)-methyltransferase (252 aa).

S-adenosyl-L-methionine-binding positions include G118 and 138-143 (IGDYVL).

Belongs to the RNA methyltransferase TrmD family. As to quaternary structure, homodimer.

The protein localises to the cytoplasm. It catalyses the reaction guanosine(37) in tRNA + S-adenosyl-L-methionine = N(1)-methylguanosine(37) in tRNA + S-adenosyl-L-homocysteine + H(+). In terms of biological role, specifically methylates guanosine-37 in various tRNAs. This Pseudomonas paraeruginosa (strain DSM 24068 / PA7) (Pseudomonas aeruginosa (strain PA7)) protein is tRNA (guanine-N(1)-)-methyltransferase.